The following is a 282-amino-acid chain: Secretory carrier-associated membrane protein 1 (282 aa).

The tract at residues 1–49 (MSRYQSHSFDDGEINPFANPTSVPAATSKLSPLPPEPYDRGATMDIPLD) is disordered. At 1 to 117 (MSRYQSHSFD…EIPIHLQRIQ (117 aa)) the chain is on the cytoplasmic side. A compositionally biased stretch (polar residues) spans 18–30 (ANPTSVPAATSKL). Ser-31 carries the phosphoserine modification. Residues 48–93 (LDSGKDLKAKEKELREKEAELKRREQEIKRKEDAIAQAGIVIEEKN) adopt a coiled-coil conformation. The next 4 helical transmembrane spans lie at 118 to 138 (YVAF…IVAV), 150 to 170 (IWFL…VMWY), 185 to 205 (FGWF…AAVA), and 233 to 253 (IFYF…IWVI). At 254 to 282 (QQVYMYFRGSGKAAEMKQEATRRAMMAAL) the chain is on the cytoplasmic side.

The protein belongs to the SCAMP family.

It localises to the cell membrane. Its subcellular location is the cytoplasmic vesicle. The protein localises to the secretory vesicle membrane. In terms of biological role, probably involved in membrane trafficking. This is Secretory carrier-associated membrane protein 1 (SCAMP1) from Arabidopsis thaliana (Mouse-ear cress).